Reading from the N-terminus, the 206-residue chain is Large ribosomal subunit protein bL25 (206 aa).

Residues 184–206 (AEEAAAEVAEPEVIKKGKEEEEE) are disordered. Positions 195–206 (EVIKKGKEEEEE) are enriched in basic and acidic residues.

The protein belongs to the bacterial ribosomal protein bL25 family. CTC subfamily. In terms of assembly, part of the 50S ribosomal subunit; part of the 5S rRNA/L5/L18/L25 subcomplex. Contacts the 5S rRNA. Binds to the 5S rRNA independently of L5 and L18.

Functionally, this is one of the proteins that binds to the 5S RNA in the ribosome where it forms part of the central protuberance. This is Large ribosomal subunit protein bL25 from Thermus thermophilus (strain ATCC BAA-163 / DSM 7039 / HB27).